A 467-amino-acid chain; its full sequence is Glutamine synthetase (467 aa).

The region spanning 14 to 98 (EEVEYVDIRF…VHCNVVEPDT (85 aa)) is the GS beta-grasp domain. The 362-residue stretch at 106 to 467 (PRGAAVKAEA…PVEYQMYYSC (362 aa)) folds into the GS catalytic domain. Residues Glu131 and Glu133 each contribute to the Mg(2+) site. Asp209 contacts ATP. Residues Glu214 and Glu221 each coordinate Mg(2+). L-glutamate contacts are provided by residues 265-266 (NG) and Gly266. His270 provides a ligand contact to Mg(2+). ATP-binding positions include 272 to 274 (NMS) and Ser274. Positions 320, 326, and 338 each coordinate L-glutamate. Arg338 and Arg343 together coordinate ATP. Position 356 (Glu356) interacts with Mg(2+). Arg358 contacts L-glutamate. O-AMP-tyrosine is present on Tyr396.

Belongs to the glutamine synthetase family. Oligomer of 12 subunits arranged in the form of two hexameric ring. Mg(2+) serves as cofactor.

The protein resides in the cytoplasm. It catalyses the reaction L-glutamate + NH4(+) + ATP = L-glutamine + ADP + phosphate + H(+). Its activity is regulated as follows. The activity of this enzyme could be controlled by adenylation under conditions of abundant glutamine. In terms of biological role, catalyzes the ATP-dependent biosynthesis of glutamine from glutamate and ammonia. This Cereibacter sphaeroides (Rhodobacter sphaeroides) protein is Glutamine synthetase.